The primary structure comprises 128 residues: Large ribosomal subunit protein bL17 (128 aa).

Belongs to the bacterial ribosomal protein bL17 family. In terms of assembly, part of the 50S ribosomal subunit. Contacts protein L32.

This Streptococcus agalactiae serotype Ia (strain ATCC 27591 / A909 / CDC SS700) protein is Large ribosomal subunit protein bL17.